Consider the following 185-residue polypeptide: Large ribosomal subunit protein uL22 (185 aa).

Belongs to the universal ribosomal protein uL22 family. As to quaternary structure, part of the 50S ribosomal subunit.

In terms of biological role, this protein binds specifically to 23S rRNA. It makes multiple contacts with different domains of the 23S rRNA in the assembled 50S subunit and ribosome. Its function is as follows. The globular domain of the protein is located near the polypeptide exit tunnel on the outside of the subunit, while an extended beta-hairpin is found that lines the wall of the exit tunnel in the center of the 70S ribosome. The polypeptide is Large ribosomal subunit protein uL22 (Pyrobaculum neutrophilum (strain DSM 2338 / JCM 9278 / NBRC 100436 / V24Sta) (Thermoproteus neutrophilus)).